The following is a 70-amino-acid chain: MREIFTGLPWWVKWIAVPVIALVVFGGLIVSVVGFVVGLLFKLLVFVALVGGLIYVVRKFMSSSSSRSDW.

Transmembrane regions (helical) follow at residues 19-39 (VIALVVFGGLIVSVVGFVVGL) and 40-60 (LFKLLVFVALVGGLIYVVRKF).

The protein resides in the cell membrane. This is an uncharacterized protein from Streptomyces coelicolor (strain ATCC BAA-471 / A3(2) / M145).